Reading from the N-terminus, the 845-residue chain is Translation initiation factor IF-2 (845 aa).

Disordered stretches follow at residues 45-91 and 127-209; these read RRKI…SNLS and EESL…TPKV. The segment covering 81–91 has biased composition (polar residues); that stretch reads SESSMAKSNLS. The span at 137 to 149 shows a compositional bias: basic and acidic residues; that stretch reads TEIHQEEQKEEKN. The segment covering 151–162 has biased composition (polar residues); it reads PVQTSPLSSAHS. The span at 179–193 shows a compositional bias: basic and acidic residues; sequence TEKRKADEIKNDDRH. In terms of domain architecture, tr-type G spans 343 to 512; the sequence is PRPPVVTIMG…LLQAELLDLK (170 aa). A G1 region spans residues 352 to 359; sequence GHVDHGKT. 352 to 359 serves as a coordination point for GTP; sequence GHVDHGKT. Residues 377-381 form a G2 region; sequence GITQH. A G3 region spans residues 398–401; the sequence is DTPG. GTP-binding positions include 398 to 402 and 452 to 455; these read DTPGH and NKID. The tract at residues 452 to 455 is G4; sequence NKID. The G5 stretch occupies residues 488–490; that stretch reads SAK.

It belongs to the TRAFAC class translation factor GTPase superfamily. Classic translation factor GTPase family. IF-2 subfamily.

The protein resides in the cytoplasm. Its function is as follows. One of the essential components for the initiation of protein synthesis. Protects formylmethionyl-tRNA from spontaneous hydrolysis and promotes its binding to the 30S ribosomal subunits. Also involved in the hydrolysis of GTP during the formation of the 70S ribosomal complex. This is Translation initiation factor IF-2 from Bartonella quintana (strain Toulouse) (Rochalimaea quintana).